The chain runs to 470 residues: Membrane-bound lytic murein transglycosylase F (470 aa).

Residues 1 to 21 form the signal peptide; the sequence is MLKEKLIIIITLVMLLCACDI. A non-LT domain region spans residues 22–259; sequence QEQSTQLAQI…VLEEKYFGHV (238 aa). The interval 260–470 is LT domain; the sequence is RQFNYVNTLA…PKIGDEVEAK (211 aa). Glu304 is an active-site residue.

In the N-terminal section; belongs to the bacterial solute-binding protein 3 family. This sequence in the C-terminal section; belongs to the transglycosylase Slt family.

It is found in the cell outer membrane. The catalysed reaction is Exolytic cleavage of the (1-&gt;4)-beta-glycosidic linkage between N-acetylmuramic acid (MurNAc) and N-acetylglucosamine (GlcNAc) residues in peptidoglycan, from either the reducing or the non-reducing ends of the peptidoglycan chains, with concomitant formation of a 1,6-anhydrobond in the MurNAc residue.. Its function is as follows. Murein-degrading enzyme that degrades murein glycan strands and insoluble, high-molecular weight murein sacculi, with the concomitant formation of a 1,6-anhydromuramoyl product. Lytic transglycosylases (LTs) play an integral role in the metabolism of the peptidoglycan (PG) sacculus. Their lytic action creates space within the PG sacculus to allow for its expansion as well as for the insertion of various structures such as secretion systems and flagella. The polypeptide is Membrane-bound lytic murein transglycosylase F (Pseudoalteromonas translucida (strain TAC 125)).